Reading from the N-terminus, the 619-residue chain is Cationic amino acid transporter 3 (619 aa).

The Cytoplasmic segment spans residues Met-1–Asp-36. The helical transmembrane segment at Leu-37–Val-57 threads the bilayer. Residues Ala-58–Lys-61 lie on the Extracellular side of the membrane. A helical membrane pass occupies residues Ala-62–Leu-82. The Cytoplasmic segment spans residues Cys-83–Glu-107. The chain crosses the membrane as a helical span at residues Leu-108–Val-128. At Ala-129–Glu-162 the chain is on the extracellular side. The chain crosses the membrane as a helical span at residues Tyr-163–Ala-183. Residues Ser-184–Lys-191 lie on the Cytoplasmic side of the membrane. A helical transmembrane segment spans residues Val-192–Gly-212. Topologically, residues Asp-213 to Asp-233 are extracellular. An N-linked (GlcNAc...) asparagine glycan is attached at Asn-232. A helical membrane pass occupies residues Thr-234–Leu-254. The Cytoplasmic segment spans residues Arg-255–Pro-285. A helical membrane pass occupies residues Met-286–Leu-306. Over Thr-307–Tyr-335 the chain is Extracellular. A helical membrane pass occupies residues Val-336–Met-356. The Cytoplasmic segment spans residues Pro-357–Thr-382. A helical transmembrane segment spans residues Pro-383–Leu-403. The Extracellular portion of the chain corresponds to Thr-404 to Leu-406. A helical transmembrane segment spans residues Val-407–Ile-427. Over Leu-428–Gln-475 the chain is Cytoplasmic. Residues Ile-476 to Ala-496 form a helical membrane-spanning segment. Over Gln-497–Asp-506 the chain is Extracellular. The helical transmembrane segment at Leu-507–Ile-527 threads the bilayer. At Trp-528–Lys-540 the chain is on the cytoplasmic side. Residues Val-541–Gln-561 form a helical membrane-spanning segment. Residues Met-562–Arg-569 lie on the Extracellular side of the membrane. Residues Phe-570–Leu-590 form a helical membrane-spanning segment. The Cytoplasmic portion of the chain corresponds to Glu-591–Val-619. Phosphothreonine is present on Thr-606. Residue Ser-618 is modified to Phosphoserine.

Belongs to the amino acid-polyamine-organocation (APC) superfamily. Cationic amino acid transporter (CAT) (TC 2.A.3.3) family. N-glycosylated. In terms of tissue distribution, highly expressed in thymus, uterus and testis. Detected at lower levels in brain, mammary gland, prostate, salivary gland and fetal spleen. In brain, highest expression in thalamus, hippocampus and amygdala.

The protein resides in the cell membrane. The catalysed reaction is L-arginine(in) = L-arginine(out). It carries out the reaction L-lysine(in) = L-lysine(out). The enzyme catalyses L-ornithine(in) = L-ornithine(out). In terms of biological role, uniporter that mediates the uptake of cationic L-amino acids such as L-arginine, L-lysine and L-ornithine. The transport is sodium ions- and pH-independent, moderately trans-stimulated and is mediated by passive diffusion. The chain is Cationic amino acid transporter 3 from Homo sapiens (Human).